A 75-amino-acid chain; its full sequence is Putative snRNP Sm-like protein (75 aa).

The Sm domain occupies 4–75 (RPLDVIHRSL…NVLAISPTEE (72 aa)).

This sequence belongs to the snRNP Sm proteins family.

This Pyrococcus horikoshii (strain ATCC 700860 / DSM 12428 / JCM 9974 / NBRC 100139 / OT-3) protein is Putative snRNP Sm-like protein.